The sequence spans 388 residues: Succinate--CoA ligase [ADP-forming] subunit beta (388 aa).

An ATP-grasp domain is found at 9-244 (KQLFARYGMP…LSQEDERESR (236 aa)). ATP is bound by residues lysine 46, 53–55 (GRG), glutamate 99, threonine 102, and glutamate 107. The Mg(2+) site is built by asparagine 199 and aspartate 213. Substrate contacts are provided by residues asparagine 264 and 321-323 (GIV).

It belongs to the succinate/malate CoA ligase beta subunit family. In terms of assembly, heterotetramer of two alpha and two beta subunits. It depends on Mg(2+) as a cofactor.

It carries out the reaction succinate + ATP + CoA = succinyl-CoA + ADP + phosphate. The enzyme catalyses GTP + succinate + CoA = succinyl-CoA + GDP + phosphate. It participates in carbohydrate metabolism; tricarboxylic acid cycle; succinate from succinyl-CoA (ligase route): step 1/1. Functionally, succinyl-CoA synthetase functions in the citric acid cycle (TCA), coupling the hydrolysis of succinyl-CoA to the synthesis of either ATP or GTP and thus represents the only step of substrate-level phosphorylation in the TCA. The beta subunit provides nucleotide specificity of the enzyme and binds the substrate succinate, while the binding sites for coenzyme A and phosphate are found in the alpha subunit. The polypeptide is Succinate--CoA ligase [ADP-forming] subunit beta (Serratia proteamaculans (strain 568)).